Here is a 299-residue protein sequence, read N- to C-terminus: ATP phosphoribosyltransferase (299 aa).

It belongs to the ATP phosphoribosyltransferase family. Long subfamily. Equilibrium between an active dimeric form, an inactive hexameric form and higher aggregates. Interconversion between the various forms is largely reversible and is influenced by the natural substrates and inhibitors of the enzyme. Mg(2+) serves as cofactor.

It is found in the cytoplasm. The catalysed reaction is 1-(5-phospho-beta-D-ribosyl)-ATP + diphosphate = 5-phospho-alpha-D-ribose 1-diphosphate + ATP. The protein operates within amino-acid biosynthesis; L-histidine biosynthesis; L-histidine from 5-phospho-alpha-D-ribose 1-diphosphate: step 1/9. With respect to regulation, feedback inhibited by histidine. In terms of biological role, catalyzes the condensation of ATP and 5-phosphoribose 1-diphosphate to form N'-(5'-phosphoribosyl)-ATP (PR-ATP). Has a crucial role in the pathway because the rate of histidine biosynthesis seems to be controlled primarily by regulation of HisG enzymatic activity. This Escherichia coli O81 (strain ED1a) protein is ATP phosphoribosyltransferase.